Consider the following 100-residue polypeptide: Small ribosomal subunit protein uS14 (100 aa).

This sequence belongs to the universal ribosomal protein uS14 family. Part of the 30S ribosomal subunit. Contacts proteins S3 and S10.

Its function is as follows. Binds 16S rRNA, required for the assembly of 30S particles and may also be responsible for determining the conformation of the 16S rRNA at the A site. This Rippkaea orientalis (strain PCC 8801 / RF-1) (Cyanothece sp. (strain PCC 8801)) protein is Small ribosomal subunit protein uS14.